The sequence spans 206 residues: MDLKVTTLAGKDAGKVEVSDEIFGLDPREDILHRVVRWQLAKRQQGTHKAKGRAEIARTGAKMYRQKGTGRARHSSARAPQFRGGGKAHGPVPHSHAHDLPKKVRALGLKHALSAKAKSANLIIVDDLAIKEAKTKALVESFAKLGVTNALMIGGAEIDAGFKRAAANIPNIDVLPIQGINVYDILRRGTLVLSKAAVEALEERFK.

The segment at 63–98 (MYRQKGTGRARHSSARAPQFRGGGKAHGPVPHSHAH) is disordered. Over residues 64 to 76 (YRQKGTGRARHSS) the composition is skewed to basic residues.

The protein belongs to the universal ribosomal protein uL4 family. As to quaternary structure, part of the 50S ribosomal subunit.

Its function is as follows. One of the primary rRNA binding proteins, this protein initially binds near the 5'-end of the 23S rRNA. It is important during the early stages of 50S assembly. It makes multiple contacts with different domains of the 23S rRNA in the assembled 50S subunit and ribosome. Forms part of the polypeptide exit tunnel. In Chelativorans sp. (strain BNC1), this protein is Large ribosomal subunit protein uL4.